Here is a 338-residue protein sequence, read N- to C-terminus: Pseudouridylate synthase TRUB1 (338 aa).

Ala2 carries the N-acetylalanine modification. Asp109 serves as the catalytic Nucleophile.

This sequence belongs to the pseudouridine synthase TruB family.

Its subcellular location is the nucleus. It localises to the cytoplasm. The protein localises to the cytosol. It carries out the reaction a uridine in mRNA = a pseudouridine in mRNA. The enzyme catalyses a uridine in tRNA = a pseudouridine in tRNA. The catalysed reaction is uridine(55) in tRNA = pseudouridine(55) in tRNA. Its function is as follows. Pseudouridine synthase that catalyzes pseudouridylation of mRNAs and tRNAs. Mediates pseudouridylation of mRNAs with the consensus sequence 5'-GUUCNANNC-3', harboring a stem-loop structure. Constitutes the major pseudouridine synthase acting on mRNAs. Also catalyzes pseudouridylation of some tRNAs, including synthesis of pseudouridine(55) from uracil-55, in the psi GC loop of a subset of tRNAs. Promotes the processing of pri-let-7 microRNAs (pri-miRNAs) independently of its RNA pseudouridylate synthase activity. Acts by binding to the stem-loop structure on pri-let-7, preventing LIN28-binding (LIN28A and/or LIN28B), thereby enhancing the interaction between pri-let-7 and the microprocessor DGCR8, which mediates miRNA maturation. The chain is Pseudouridylate synthase TRUB1 from Mus musculus (Mouse).